A 182-amino-acid chain; its full sequence is Mu-like prophage FluMu protein gp45 (182 aa).

Residues 159-182 (TDHQSSGISGKNHDHEERVGKPVP) are disordered. A compositionally biased stretch (basic and acidic residues) spans 169–182 (KNHDHEERVGKPVP).

This sequence to phage Mu protein gp45.

The chain is Mu-like prophage FluMu protein gp45 from Haemophilus influenzae (strain ATCC 51907 / DSM 11121 / KW20 / Rd).